A 3046-amino-acid chain; its full sequence is Nucleosome-remodeling factor subunit BPTF (3046 aa).

A disordered region spans residues 1-232 (MRGRRGRPPK…DIPPLEFPKS (232 aa)). Residues 22-33 (PAPPPPPPPPTS) are compositionally biased toward pro residues. The segment covering 62–72 (TRLSSPRGGSS) has biased composition (low complexity). Over residues 78 to 87 (PPPPPAPPST) the composition is skewed to pro residues. Positions 91-110 (GRGGRGGGGGRTGGGGGGGH) are enriched in gly residues. Residues 129-186 (HESEEEEEEEDMVSEEEEEEDGDAEETQDSEDDEEDEMEEDDDDSDYPEEMEDDDDDA) show a composition bias toward acidic residues. A compositionally biased stretch (low complexity) spans 190–203 (TESSFRSHSTYSST). Positions 205–215 (GRRKPRVHRPR) are enriched in basic residues. The residue at position 216 (S216) is a Phosphoserine. Residues 240-300 (NEHIMNVIAI…LKAVLREEDT (61 aa)) form the DDT domain. The PHD-type 1 zinc finger occupies 390-437 (DDHCRVCHKLGDLLCCETCSAVYHLECVKPPLEEVPEDEWQCEVCVAH). 2 stretches are compositionally biased toward basic and acidic residues: residues 567-609 (IDNV…SDDK) and 616-628 (EQGK…EVGD). Residues 567–774 (IDNVKSPEET…GAGKGASGST (208 aa)) are disordered. Residue S572 is modified to Phosphoserine. Residues 574–604 (EETEKDKNETENDSKDAEKNREEFEDQSLEK) are a coiled coil. Polar residues-rich tracts occupy residues 631–653 (NSVS…SPSE) and 690–705 (TCES…SIQP). The tract at residues 640–749 (NTTNATSEET…PVSIQEEIVG (110 aa)) is interaction with KEAP1. Residues 706–723 (NLENSNSSSELNSSQSES) show a composition bias toward low complexity. Basic and acidic residues predominate over residues 725–738 (KAADDPENGERESH). S763 and S817 each carry phosphoserine. The tract at residues 839–921 (YFKLGQEGKY…QLENNIPSSF (83 aa)) is interaction with MAZ. K880 carries the post-translational modification N6-acetyllysine. The stretch at 978-1007 (MTSIEREEKEKVKKKEKKQEEEETMQQATW) forms a coiled coil. The segment at 1057-1157 (YRKSLEGTKN…MKTESHVNCQ (101 aa)) is disordered. The residue at position 1064 (T1064) is a Phosphothreonine. Basic and acidic residues-rich tracts occupy residues 1087 to 1102 (IKIE…KGSD) and 1113 to 1152 (DISK…KTES). Glycyl lysine isopeptide (Lys-Gly) (interchain with G-Cter in SUMO2) cross-links involve residues K1088, K1138, and K1209. Disordered regions lie at residues 1215-1339 (KGIG…GNDF), 1371-1448 (IVSS…FRTR), 1465-1537 (GEST…NGKD), and 1605-1706 (NSSE…GESK). 3 stretches are compositionally biased toward polar residues: residues 1220–1232 (TSTN…SESP), 1242–1257 (QSDS…ANND), and 1266–1285 (CSES…TTNK). At S1231 the chain carries Phosphoserine. The span at 1287-1305 (YPKDRVLDDVSIRSPETKC) shows a compositional bias: basic and acidic residues. S1300 bears the Phosphoserine mark. T1303 is subject to Phosphothreonine. A Phosphoserine modification is found at S1310. Low complexity predominate over residues 1372-1386 (VSSSKSALHSSVPKS). 2 stretches are compositionally biased toward polar residues: residues 1409-1426 (SESN…SIQD) and 1434-1444 (VQNSNESISEQ). Residues 1491 to 1525 (KKLEERPVNKCSDQIKLKNTTDKKNNENRESEKKG) show a composition bias toward basic and acidic residues. Over residues 1629–1656 (TLPSTKESDSTQTTTPSASCPESNSVNQ) the composition is skewed to polar residues. K1730 participates in a covalent cross-link: Glycyl lysine isopeptide (Lys-Gly) (interchain with G-Cter in SUMO2). Disordered stretches follow at residues 1973–2003 (VPET…TPKQ) and 2041–2070 (QAKK…STIS). Positions 2022–2050 (EIRAFAERVEKEKAQAVEQQAKKRLEQQK) form a coiled coil. The segment covering 2054-2070 (IATSTTSPTSSTTSTIS) has biased composition (low complexity). Phosphoserine is present on S2098. R2155 bears the Omega-N-methylarginine mark. The interval 2160 to 2180 (TIRPNTSGSGGTTSNSQVITG) is disordered. An asymmetric dimethylarginine mark is found at R2162, R2184, and R2191. Over residues 2232 to 2256 (VSAPNTVSSTPGQKSLTSATSTSNI) the composition is skewed to polar residues. 4 disordered regions span residues 2232-2270 (VSAP…QQGQ), 2346-2549 (TAST…RPQL), 2714-2733 (QAAK…SKQN), and 2795-2858 (PCPP…ISTT). 2 stretches are compositionally biased toward low complexity: residues 2257 to 2270 (QSSA…QQGQ) and 2346 to 2362 (TAST…AGTG). Over residues 2363-2375 (EQRQSKLSPQMQV) the composition is skewed to polar residues. Positions 2391-2431 (PAEAQPQTAQPSAQPQPQTQPQSPAQPEVQTQPEVQTQTTV) are enriched in low complexity. The segment covering 2432–2485 (SSHVPSEAQPTHAQSSKPQVAAQSQPQSNVQGQSPVRVQSPSQTRIRPSTPSQL) has biased composition (polar residues). At S2465 the chain carries Phosphoserine. The span at 2486–2538 (SPGQQSQVQTTTSQPIPIQPHTSLQIPSQGQPQSQPQVQSSTQTLSSGQTLNQ) shows a compositional bias: low complexity. Residues 2706–2732 (DKIDKEEKQAAKKRKREESVEQKRSKQ) adopt a coiled-coil conformation. Over residues 2714–2729 (QAAKKRKREESVEQKR) the composition is skewed to basic and acidic residues. Residues 2795-2818 (PCPPVTPAPPAPPAPPPSPPPPPA) show a composition bias toward pro residues. The span at 2838 to 2847 (KREEEKDSSS) shows a compositional bias: basic and acidic residues. A PHD-type 2 zinc finger spans residues 2867-2918 (KLYCICKTPYDESKFYIGCDRCQNWYHGRCVGILQSEAELIDEYVCPQCQST). The region spanning 2927–3031 (PLTEKDYEGL…SFFVQKLKGF (105 aa)) is the Bromo domain.

This sequence belongs to the PBTF family. In terms of assembly, interacts with MAZ. Interacts with KEAP1. Component of the NURF-1 ISWI chromatin remodeling complex (also called the nucleosome-remodeling factor (NURF) complex) at least composed of SMARCA1 (isoform 2), BPTF, RBBP4 and RBBP7. Within the complex interacts with isoform 2 of SMARCA1. Component of the BPFT-SMARCA1 complex at least composed of SMARCA1 (isoform 1), BPFT, RBBP4 and RBBP7; the complex is catalytically inactive and does not remodel chromatin. Within the complex interacts with isoform 1 of SMARCA1. Component of the NURF-5 ISWI chromatin remodeling complex at least composed of SMARCA5/SNF2H and BPTF. Within NURF-5 ISWI chromatin remodeling complex interacts with SMARCA5/SNF2H. Phosphorylation enhances DNA-binding. In terms of processing, highly susceptible to proteolysis. In terms of tissue distribution, ubiquitously expressed, with highest levels in testis. Present in kidney, liver and brain. In the brain, highest levels are found in motor cortex (at protein level).

The protein localises to the cytoplasm. The protein resides in the nucleus. Functionally, regulatory subunit of the ATP-dependent NURF-1 and NURF-5 ISWI chromatin remodeling complexes, which form ordered nucleosome arrays on chromatin and facilitate access to DNA during DNA-templated processes such as DNA replication, transcription, and repair. The NURF-1 ISWI chromatin remodeling complex has a lower ATP hydrolysis rate than the NURF-5 ISWI chromatin remodeling complex. Within the NURF-1 ISWI chromatin-remodeling complex, binds to the promoters of En1 and En2 to positively regulate their expression and promote brain development. Histone-binding protein which binds to H3 tails trimethylated on 'Lys-4' (H3K4me3), which mark transcription start sites of active genes. Binds to histone H3 tails dimethylated on 'Lys-4' (H3K4Me2) to a lesser extent. May also regulate transcription through direct binding to DNA or transcription factors. In Homo sapiens (Human), this protein is Nucleosome-remodeling factor subunit BPTF (BPTF).